We begin with the raw amino-acid sequence, 308 residues long: Probable acetylxylan esterase A (308 aa).

Residues 1–19 (MAPFSFLLTLLLYTLSAGA) form the signal peptide. N-linked (GlcNAc...) asparagine glycosylation is present at asparagine 141. Serine 151 serves as the catalytic Charge relay system. Asparagine 193 is a glycosylation site (N-linked (GlcNAc...) asparagine).

This sequence belongs to the carbohydrate esterase 1 (CE1) family. AxeA subfamily. In terms of assembly, monomer.

The protein resides in the secreted. The enzyme catalyses Deacetylation of xylans and xylo-oligosaccharides.. It participates in glycan degradation; xylan degradation. Its function is as follows. Acetylxylan esterase involved in the hydrolysis of xylan, a major structural heterogeneous polysaccharide found in plant biomass representing the second most abundant polysaccharide in the biosphere, after cellulose. Degrades acetylated xylans by cleaving acetyl side groups from the hetero-xylan backbone. The sequence is that of Probable acetylxylan esterase A (axeA) from Aspergillus clavatus (strain ATCC 1007 / CBS 513.65 / DSM 816 / NCTC 3887 / NRRL 1 / QM 1276 / 107).